A 66-amino-acid polypeptide reads, in one-letter code: Surface composition regulator (66 aa).

Belongs to the GlgS family.

Its function is as follows. Major determinant of cell surface composition. Negatively regulates motility, adhesion and synthesis of biofilm exopolysaccharides. The chain is Surface composition regulator from Escherichia coli O127:H6 (strain E2348/69 / EPEC).